Consider the following 121-residue polypeptide: Cysteine-rich neurotrophic factor (121 aa).

Residues methionine 1–alanine 18 form the signal peptide. An N-linked (GlcNAc...) asparagine glycan is attached at asparagine 57.

The protein resides in the secreted. In terms of biological role, interacts with the p75 low-affinity neurotrophin receptor. Evokes neurite outgrowth and modulated calcium currents in pedal motor neurons. May be involved in target-derived trophic support for motor neurons. The polypeptide is Cysteine-rich neurotrophic factor (Lymnaea stagnalis (Great pond snail)).